A 452-amino-acid chain; its full sequence is RNA polymerase II-associated protein rba50 (452 aa).

Disordered regions lie at residues 60–83 (LRKN…IDEE), 125–202 (EREL…QTKR), and 223–261 (PIKG…PLEF). Basic and acidic residues predominate over residues 125 to 135 (ERELAQRKDRS). Polar residues predominate over residues 136–154 (SQVNTPDLSQRPSDDSFLS). The segment covering 156–165 (EKLRSSEKLN) has biased composition (basic and acidic residues). A compositionally biased stretch (low complexity) spans 170-191 (SVLSSEAVDSSSGSPSPPMALS).

This sequence belongs to the RPAP1 family. Interacts with RNA polymerase II.

Its subcellular location is the cytoplasm. It is found in the nucleus. Forms an interface between the RNA polymerase II enzyme and chaperone/scaffolding proteins, suggesting that it is required to connect RNA polymerase II to regulators of protein complex formation. The sequence is that of RNA polymerase II-associated protein rba50 (rba50) from Schizosaccharomyces pombe (strain 972 / ATCC 24843) (Fission yeast).